The primary structure comprises 364 residues: Aminomethyltransferase (364 aa).

This sequence belongs to the GcvT family. In terms of assembly, the glycine cleavage system is composed of four proteins: P, T, L and H.

It carries out the reaction N(6)-[(R)-S(8)-aminomethyldihydrolipoyl]-L-lysyl-[protein] + (6S)-5,6,7,8-tetrahydrofolate = N(6)-[(R)-dihydrolipoyl]-L-lysyl-[protein] + (6R)-5,10-methylene-5,6,7,8-tetrahydrofolate + NH4(+). The glycine cleavage system catalyzes the degradation of glycine. This Salmonella paratyphi B (strain ATCC BAA-1250 / SPB7) protein is Aminomethyltransferase.